The sequence spans 159 residues: MKSIFLVFFAVCLVKAEAGKGRKREPNIINPPCRECYVQDSSGNCVYDKWGCGGARKREPNIINPPCRECYVQDSSGNCVYDKWGCGGARKREPNIINPPCRECYVQDSSGNCVYDKWGCGGARKREPNIINPPCRECYVQDSSGNCVYHKWGCGGARK.

An N-terminal signal peptide occupies residues 1–18 (MKSIFLVFFAVCLVKAEA). The propeptide occupies 19-26 (GKGRKREP). Intrachain disulfides connect cysteine 33–cysteine 45 and cysteine 36–cysteine 52. Positions 59 to 60 (EP) are excised as a propeptide. 2 disulfide bridges follow: cysteine 67/cysteine 79 and cysteine 70/cysteine 86. The propeptide occupies 93 to 94 (EP). Intrachain disulfides connect cysteine 101/cysteine 113 and cysteine 104/cysteine 120. Residues 127–128 (EP) constitute a propeptide that is removed on maturation. Disulfide bonds link cysteine 135–cysteine 147 and cysteine 138–cysteine 154.

Belongs to the sea anemone BBH family.

Its subcellular location is the secreted. It localises to the nematocyst. Inhibits ion channels. The chain is U-actitoxin-Avd13a/b from Anemonia viridis (Snakelocks anemone).